We begin with the raw amino-acid sequence, 254 residues long: 3-deoxy-manno-octulosonate cytidylyltransferase (254 aa).

The protein belongs to the KdsB family.

The protein localises to the cytoplasm. It catalyses the reaction 3-deoxy-alpha-D-manno-oct-2-ulosonate + CTP = CMP-3-deoxy-beta-D-manno-octulosonate + diphosphate. The protein operates within nucleotide-sugar biosynthesis; CMP-3-deoxy-D-manno-octulosonate biosynthesis; CMP-3-deoxy-D-manno-octulosonate from 3-deoxy-D-manno-octulosonate and CTP: step 1/1. It functions in the pathway bacterial outer membrane biogenesis; lipopolysaccharide biosynthesis. In terms of biological role, activates KDO (a required 8-carbon sugar) for incorporation into bacterial lipopolysaccharide in Gram-negative bacteria. The sequence is that of 3-deoxy-manno-octulosonate cytidylyltransferase from Pseudomonas fluorescens (strain SBW25).